A 159-amino-acid polypeptide reads, in one-letter code: Eukaryotic translation initiation factor 5A-3 (159 aa).

Residues 1-12 (MSDEEHQFESKA) are compositionally biased toward basic and acidic residues. The disordered stretch occupies residues 1–21 (MSDEEHQFESKADAGASKTYP). Lysine 52 is subject to Hypusine.

It belongs to the eIF-5A family. In terms of processing, lys-52 undergoes hypusination, a unique post-translational modification that consists in the addition of a butylamino group from spermidine to lysine side chain, leading to the formation of the unusual amino acid hypusine. eIF-5As are the only known proteins to undergo this modification, which is essential for their function.

Its function is as follows. Translation factor that promotes translation elongation and termination, particularly upon ribosome stalling at specific amino acid sequence contexts. Binds between the exit (E) and peptidyl (P) site of the ribosome and promotes rescue of stalled ribosome: specifically required for efficient translation of polyproline-containing peptides as well as other motifs that stall the ribosome. Acts as a ribosome quality control (RQC) cofactor by joining the RQC complex to facilitate peptidyl transfer during CAT tailing step. In Solanum lycopersicum (Tomato), this protein is Eukaryotic translation initiation factor 5A-3.